The following is a 403-amino-acid chain: Phosphopentomutase (403 aa).

6 residues coordinate Mn(2+): Asp13, Asp298, His303, Asp339, His340, and His351.

The protein belongs to the phosphopentomutase family. Mn(2+) serves as cofactor.

The protein resides in the cytoplasm. The catalysed reaction is 2-deoxy-alpha-D-ribose 1-phosphate = 2-deoxy-D-ribose 5-phosphate. It carries out the reaction alpha-D-ribose 1-phosphate = D-ribose 5-phosphate. It participates in carbohydrate degradation; 2-deoxy-D-ribose 1-phosphate degradation; D-glyceraldehyde 3-phosphate and acetaldehyde from 2-deoxy-alpha-D-ribose 1-phosphate: step 1/2. In terms of biological role, isomerase that catalyzes the conversion of deoxy-ribose 1-phosphate (dRib-1-P) and ribose 1-phosphate (Rib-1-P) to deoxy-ribose 5-phosphate (dRib-5-P) and ribose 5-phosphate (Rib-5-P), respectively. The protein is Phosphopentomutase of Streptococcus uberis (strain ATCC BAA-854 / 0140J).